A 255-amino-acid chain; its full sequence is Pyridoxine 5'-phosphate synthase (255 aa).

2 residues coordinate 3-amino-2-oxopropyl phosphate: Asn-8 and Arg-19. Catalysis depends on His-44, which acts as the Proton acceptor. 2 residues coordinate 1-deoxy-D-xylulose 5-phosphate: Arg-46 and His-51. The active-site Proton acceptor is the Glu-74. Thr-111 provides a ligand contact to 1-deoxy-D-xylulose 5-phosphate. The active-site Proton donor is His-202. 3-amino-2-oxopropyl phosphate is bound by residues Asp-203 and 225–226 (GH).

The protein belongs to the PNP synthase family. As to quaternary structure, homooctamer; tetramer of dimers.

It is found in the cytoplasm. It carries out the reaction 3-amino-2-oxopropyl phosphate + 1-deoxy-D-xylulose 5-phosphate = pyridoxine 5'-phosphate + phosphate + 2 H2O + H(+). It participates in cofactor biosynthesis; pyridoxine 5'-phosphate biosynthesis; pyridoxine 5'-phosphate from D-erythrose 4-phosphate: step 5/5. Catalyzes the complicated ring closure reaction between the two acyclic compounds 1-deoxy-D-xylulose-5-phosphate (DXP) and 3-amino-2-oxopropyl phosphate (1-amino-acetone-3-phosphate or AAP) to form pyridoxine 5'-phosphate (PNP) and inorganic phosphate. The protein is Pyridoxine 5'-phosphate synthase of Xanthomonas oryzae pv. oryzae (strain PXO99A).